Reading from the N-terminus, the 879-residue chain is Leucine--tRNA ligase (879 aa).

A 'HIGH' region motif is present at residues proline 45–histidine 55. Residues lysine 637 to serine 641 carry the 'KMSKS' region motif. Position 640 (lysine 640) interacts with ATP.

This sequence belongs to the class-I aminoacyl-tRNA synthetase family.

It is found in the cytoplasm. It carries out the reaction tRNA(Leu) + L-leucine + ATP = L-leucyl-tRNA(Leu) + AMP + diphosphate. The chain is Leucine--tRNA ligase from Xylella fastidiosa (strain M12).